The sequence spans 556 residues: Formate--tetrahydrofolate ligase (556 aa).

An ATP-binding site is contributed by 65–72 (TPAGEGKT).

It belongs to the formate--tetrahydrofolate ligase family.

It catalyses the reaction (6S)-5,6,7,8-tetrahydrofolate + formate + ATP = (6R)-10-formyltetrahydrofolate + ADP + phosphate. The protein operates within one-carbon metabolism; tetrahydrofolate interconversion. The chain is Formate--tetrahydrofolate ligase from Symbiobacterium thermophilum (strain DSM 24528 / JCM 14929 / IAM 14863 / T).